The sequence spans 192 residues: Crossover junction endodeoxyribonuclease RuvC (192 aa).

Active-site residues include D7, E67, and D140. Residues D7, E67, and D140 each coordinate Mg(2+). Residues 158-192 (RQSGVPPRTNSRRKSGTGGSWEQFVRQSPNVVVRS) form a disordered region. The segment covering 182-192 (VRQSPNVVVRS) has biased composition (polar residues).

It belongs to the RuvC family. Homodimer which binds Holliday junction (HJ) DNA. The HJ becomes 2-fold symmetrical on binding to RuvC with unstacked arms; it has a different conformation from HJ DNA in complex with RuvA. In the full resolvosome a probable DNA-RuvA(4)-RuvB(12)-RuvC(2) complex forms which resolves the HJ. Mg(2+) serves as cofactor.

Its subcellular location is the cytoplasm. The enzyme catalyses Endonucleolytic cleavage at a junction such as a reciprocal single-stranded crossover between two homologous DNA duplexes (Holliday junction).. The RuvA-RuvB-RuvC complex processes Holliday junction (HJ) DNA during genetic recombination and DNA repair. Endonuclease that resolves HJ intermediates. Cleaves cruciform DNA by making single-stranded nicks across the HJ at symmetrical positions within the homologous arms, yielding a 5'-phosphate and a 3'-hydroxyl group; requires a central core of homology in the junction. The consensus cleavage sequence is 5'-(A/T)TT(C/G)-3'. Cleavage occurs on the 3'-side of the TT dinucleotide at the point of strand exchange. HJ branch migration catalyzed by RuvA-RuvB allows RuvC to scan DNA until it finds its consensus sequence, where it cleaves and resolves the cruciform DNA. This is Crossover junction endodeoxyribonuclease RuvC from Chlorobium chlorochromatii (strain CaD3).